The primary structure comprises 389 residues: Putative nickel insertion protein (389 aa).

Belongs to the LarC family.

The chain is Putative nickel insertion protein from Desulfotalea psychrophila (strain LSv54 / DSM 12343).